The following is a 497-amino-acid chain: Interferon regulatory factor 5 (497 aa).

Positions 12 to 18 (PRRVRLK) match the Nuclear localization signal motif. The segment at residues 14–122 (RVRLKPWLVA…QPYKIYEVCS (109 aa)) is a DNA-binding region (IRF tryptophan pentad repeat). The tract at residues 124-178 (GPAPTESQPTDDYVLGEEEEEEEEELQRMLPGLSITEPALPGPPNAPYSLPKEDT) is disordered. Positions 137-148 (VLGEEEEEEEEE) are enriched in acidic residues. Positions 149-159 (LQRMLPGLSIT) match the Nuclear export signal motif. The residue at position 157 (S157) is a Phosphoserine; by TBK1. The residue at position 300 (S300) is a Phosphoserine. Glycyl lysine isopeptide (Lys-Gly) (interchain with G-Cter in ubiquitin) cross-links involve residues K410 and K411. S430 carries the phosphoserine modification. S434 is subject to Phosphoserine; by IKKB. Residues S436 and S439 each carry the phosphoserine modification. Residue S445 is modified to Phosphoserine; by IKKB.

Belongs to the IRF family. Homodimer, when phosphorylated. Interacts with TASL (via pLxIS motif); interaction takes place downstream of TLR7, TLR8 or TLR9, leading to its activation. Interacts with MYD88 and TRAF6. In terms of processing, phosphorylation of serine and threonine residues by IKBKB in a C-terminal autoinhibitory region, stimulates dimerization, transport into the nucleus, assembly with the coactivator CBP/EP300 and initiation of transcription. Post-translationally, 'Lys-63'-linked polyubiquitination by TRAF6 is required for activation.

Its subcellular location is the cytoplasm. It localises to the nucleus. Maintained as a monomer in an autoinhibited state. Phosphorylation and activation follow the following steps: innate adapter protein TASL recruits IRF5, thereby licensing IRF5 for phosphorylation by IKBKB. Phosphorylated IRF5 dissociates from the adapter proteins, dimerizes, and then enters the nucleus to induce IFNs. Transcription factor that plays a critical role in innate immunity by activating expression of type I interferon (IFN) IFNA and INFB and inflammatory cytokines downstream of endolysosomal toll-like receptors TLR7, TLR8 and TLR9. Regulates the transcription of type I IFN genes (IFN-alpha and IFN-beta) and IFN-stimulated genes (ISG) by binding to an interferon-stimulated response element (ISRE) in their promoters. Can efficiently activate both the IFN-beta (IFNB) and the IFN-alpha (IFNA) genes and mediate their induction downstream of the TLR-activated, MyD88-dependent pathway. This chain is Interferon regulatory factor 5, found in Mus musculus (Mouse).